Consider the following 163-residue polypeptide: CASP-like protein 1C3 (163 aa).

The Cytoplasmic portion of the chain corresponds to Met1 to Lys6. The chain crosses the membrane as a helical span at residues Ile7 to Met27. Residues Val28–Lys52 are Extracellular-facing. An N-linked (GlcNAc...) asparagine glycan is attached at Asn38. A helical membrane pass occupies residues Tyr53–Phe73. Residues Lys74–Arg79 are Cytoplasmic-facing. A helical transmembrane segment spans residues Leu80 to Leu100. Over Ala101–Gln128 the chain is Extracellular. The chain crosses the membrane as a helical span at residues Val129–Cys149. Topologically, residues Ser150–Pro163 are cytoplasmic.

It belongs to the Casparian strip membrane proteins (CASP) family. As to quaternary structure, homodimer and heterodimers.

The protein resides in the cell membrane. This is CASP-like protein 1C3 from Populus trichocarpa (Western balsam poplar).